The following is a 325-amino-acid chain: Elongation factor P--(R)-beta-lysine ligase (325 aa).

Residue 76-78 (SPE) coordinates substrate. Residues 100–102 (RNE) and N109 contribute to the ATP site. Residue Y118 coordinates substrate. ATP is bound at residue 244–245 (EL). Position 251 (E251) interacts with substrate. G300 provides a ligand contact to ATP.

This sequence belongs to the class-II aminoacyl-tRNA synthetase family. EpmA subfamily. Homodimer.

The catalysed reaction is D-beta-lysine + L-lysyl-[protein] + ATP = N(6)-((3R)-3,6-diaminohexanoyl)-L-lysyl-[protein] + AMP + diphosphate + H(+). Its function is as follows. With EpmB is involved in the beta-lysylation step of the post-translational modification of translation elongation factor P (EF-P) on 'Lys-34'. Catalyzes the ATP-dependent activation of (R)-beta-lysine produced by EpmB, forming a lysyl-adenylate, from which the beta-lysyl moiety is then transferred to the epsilon-amino group of EF-P 'Lys-34'. The protein is Elongation factor P--(R)-beta-lysine ligase of Salmonella paratyphi A (strain ATCC 9150 / SARB42).